We begin with the raw amino-acid sequence, 159 residues long: Protein RseC (159 aa).

Topologically, residues 1-72 are cytoplasmic; the sequence is MIKEWATVVS…QKVELGIAEG (72 aa). The helical transmembrane segment at 73 to 95 threads the bilayer; that stretch reads SLLSSALLVYMSPLVGLFLIASL. Residues 96 to 98 lie on the Periplasmic side of the membrane; sequence FQL. The chain crosses the membrane as a helical span at residues 99-121; it reads LFASDVAALCGAILGGIGGFLIA. Residues 122–159 lie on the Cytoplasmic side of the membrane; that stretch reads RGYSRKFAARAEWQPIILSVALPPGLVRFETSSEDASQ.

Belongs to the RseC family.

Its subcellular location is the cell inner membrane. Functionally, may play a role in reduction of the SoxR iron-sulfur cluster. May work together with the RsxABCDGE complex. The polypeptide is Protein RseC (Escherichia coli (strain K12)).